Here is a 245-residue protein sequence, read N- to C-terminus: Carbohydrate deacetylase (245 aa).

Positions 59 and 125 each coordinate Mg(2+).

It belongs to the YdjC deacetylase family. In terms of assembly, homodimer. Mg(2+) serves as cofactor.

Probably catalyzes the deacetylation of acetylated carbohydrates an important step in the degradation of oligosaccharides. The sequence is that of Carbohydrate deacetylase from Listeria monocytogenes serotype 4b (strain CLIP80459).